A 356-amino-acid chain; its full sequence is Histidinol-phosphate aminotransferase (356 aa).

An N6-(pyridoxal phosphate)lysine modification is found at Lys214.

The protein belongs to the class-II pyridoxal-phosphate-dependent aminotransferase family. Histidinol-phosphate aminotransferase subfamily. In terms of assembly, homodimer. Pyridoxal 5'-phosphate serves as cofactor.

The enzyme catalyses L-histidinol phosphate + 2-oxoglutarate = 3-(imidazol-4-yl)-2-oxopropyl phosphate + L-glutamate. The protein operates within amino-acid biosynthesis; L-histidine biosynthesis; L-histidine from 5-phospho-alpha-D-ribose 1-diphosphate: step 7/9. In Escherichia coli O9:H4 (strain HS), this protein is Histidinol-phosphate aminotransferase.